We begin with the raw amino-acid sequence, 517 residues long: Cytochrome P450 monooxygenase polD (517 aa).

Residues 5-27 (VVLVGIVVLVLAYLSSTGKVYPH) traverse the membrane as a helical segment. Cys435 provides a ligand contact to heme.

The protein belongs to the cytochrome P450 family. Heme serves as cofactor.

It is found in the membrane. Its function is as follows. Cytochrome P450 monooxygenase; part of the gene cluster that mediates the biosynthesis of antifungal fernane-type triterpenoid polytolypin. PolD doe not seem to be involved in the biosynthesis of polytolypin. Within the pathway, the triterpene cyclase polA first catalyzes the cyclization of 2,3-oxidosqualene to motiol, polc converts the 4-alpha-methyl group of motiol to a carboxyl group, polB is responsible for appending a hydroxyl group at the 2-alpha position and polE is a dual functional P450, which can catalyze the formation of both the 1-beta-hydroxyl group and 10-beta-carboxyl group. This is Cytochrome P450 monooxygenase polD from Polytolypa hystricis (strain UAMH7299).